The sequence spans 635 residues: Multiple inositol polyphosphate phosphatase 1 (635 aa).

Residues 1–23 form the signal peptide; it reads MMVKIKNIIILFCIFGLLSNVSS. The Extracellular segment spans residues 24 to 565; it reads LSSSSSSSQS…GNDSHSKKSS (542 aa). The disordered stretch occupies residues 66–102; sequence KNGDSNSQGDGSSGNSNSNSNSNSNSNSNSDSSNEPP. Over residues 67-99 the composition is skewed to low complexity; the sequence is NGDSNSQGDGSSGNSNSNSNSNSNSNSNSDSSN. His116 is a catalytic residue. Positions 380–421 are enriched in low complexity; the sequence is SSSSSSSSSSNNGDNSGSNGSSGSGSSTSTSSNDNGSTNNND. Residues 380–425 are disordered; the sequence is SSSSSSSSSSNNGDNSGSNGSSGSGSSTSTSSNDNGSTNNNDNKVE. The chain crosses the membrane as a helical span at residues 566-586; the sequence is YFLAIFIPITFLVGGTIGGIF. Topologically, residues 587–635 are cytoplasmic; it reads TYFSYEKIMQVKNRKKLTQYGNDEFISSPKSKSFSFKPTKFDSRSPLIQ. Residues 614-624 are compositionally biased toward low complexity; that stretch reads SPKSKSFSFKP. The disordered stretch occupies residues 614–635; the sequence is SPKSKSFSFKPTKFDSRSPLIQ.

It belongs to the histidine acid phosphatase family. MINPP1 subfamily.

Its subcellular location is the membrane. It carries out the reaction 1D-myo-inositol hexakisphosphate + H2O = 1D-myo-inositol 1,2,4,5,6-pentakisphosphate + phosphate. The enzyme catalyses 1D-myo-inositol 1,2,4,5,6-pentakisphosphate + H2O = 1D-myo-inositol 1,2,5,6-tetrakisphosphate + phosphate. It catalyses the reaction 1D-myo-inositol 1,2,5,6-tetrakisphosphate + H2O = 1D-myo-inositol 1,2,6-trisphosphate + phosphate. The catalysed reaction is 1D-myo-inositol 1,2,6-trisphosphate + H2O = 1D-myo-inositol 1,2-bisphosphate + phosphate. It carries out the reaction 1D-myo-inositol 1,2-bisphosphate + H2O = 1D-myo-inositol 2-phosphate + phosphate. The enzyme catalyses (2R)-2,3-bisphosphoglycerate + H2O = (2R)-2-phosphoglycerate + phosphate. Functionally, probable multiple inositol polyphosphate phosphatase that hydrolyzes 1D-myo-inositol 1,3,4,5,6-pentakisphosphate (InsP5[2OH]) and 1D-myo-inositol hexakisphosphate (InsP6) to a range of less phosphorylated inositol phosphates. This regulates the availability of these various small molecule second messengers and metal chelators which control many aspects of cell physiology. May have a dual substrate specificity, and function as a 2,3-bisphosphoglycerate 3-phosphatase hydrolyzing 2,3-bisphosphoglycerate to 2-phosphoglycerate. 2,3-bisphosphoglycerate (BPG) is formed as part of the Rapoport-Luebering glycolytic bypass. The chain is Multiple inositol polyphosphate phosphatase 1 (mipp1) from Dictyostelium discoideum (Social amoeba).